Reading from the N-terminus, the 496-residue chain is Glycine receptor subunit beta (496 aa).

Positions 1–22 are cleaved as a signal peptide; sequence MKFSLAISFFILMSLLFEDACA. The Extracellular portion of the chain corresponds to 23–268; sequence KEKSSKKGKG…IFTLRRQVGF (246 aa). The interval 32 to 53 is disordered; it reads GKKKQYLCPSQQSPEDLARVPP. Asn-54 carries N-linked (GlcNAc...) asparagine glycosylation. The glycine site is built by Arg-108 and Ser-174. Cys-183 and Cys-197 are disulfide-bonded. The N-linked (GlcNAc...) asparagine glycan is linked to Asn-242. Cys-243 and Cys-255 form a disulfide bridge. Thr-250 serves as a coordination point for glycine. The chain crosses the membrane as a helical span at residues 269–289; sequence YMMGVYAPTLLIVVLSWLSFW. At 290-294 the chain is on the cytoplasmic side; sequence INPDA. The helical transmembrane segment at 295–315 threads the bilayer; that stretch reads SAARVPLGIFSVLSLASECTT. The Extracellular segment spans residues 316–327; the sequence is LAAELPKVSYVK. A helical membrane pass occupies residues 328-349; sequence ALDVWLIACLLFGFASLVEYAV. At 350-471 the chain is on the cytoplasmic side; sequence VQVMLNNPKR…KPVIPTAAKR (122 aa). Residue Thr-391 is modified to Phosphothreonine. The helical transmembrane segment at 472–495 threads the bilayer; it reads IDLYARALFPFCFLFFNVIYWSIY. Position 496 (Leu-496) is a topological domain, extracellular.

Belongs to the ligand-gated ion channel (TC 1.A.9) family. Glycine receptor (TC 1.A.9.3) subfamily. GLRB sub-subfamily. As to quaternary structure, forms heteropentamers with glycin receptor alpha subunits. Heteropentamers with GLRA1 can be composed of two GLRA1 and three GLRB subunits, or three GLRA1 and two GLRB subunits, or four GLRA1 subunits and one GLRB subunit. Forms heteropentamers with GLRA2. Functional GLRB-GLRA2 heteropentamers contain four GLRA2 subunits and one GLRB subunit, although alternative subunit composition cannot be excluded. Forms a heteropentamer with GLRA3. Interacts with GPHN. In terms of tissue distribution, detected in spinal cord, brain and brain stem, especially in the periolivary region, spinal nuclei, trigeminal nucleus, medulla oblongata, pons and midbrain. Detected in the inner plexiform layer of the retina (at protein level). High levels of expression in cortex, hippocampus, thalamus and cerebellum. Detected in spinal cord.

The protein resides in the postsynaptic cell membrane. It is found in the synapse. The protein localises to the cell projection. Its subcellular location is the dendrite. It localises to the cell membrane. The protein resides in the cytoplasm. It carries out the reaction chloride(in) = chloride(out). With respect to regulation, channel opening is triggered by extracellular glycine. Heteropentameric channels composed of GLRB and GLRA1 are activated by lower glycine levels than homopentameric GLRA1. Functionally, subunit of heteromeric glycine-gated chloride channels. Plays an important role in the down-regulation of neuronal excitability. Contributes to the generation of inhibitory postsynaptic currents. The sequence is that of Glycine receptor subunit beta (Glrb) from Mus musculus (Mouse).